Here is a 1407-residue protein sequence, read N- to C-terminus: ABC transporter B family member 6 (1407 aa).

The segment at 18–65 is disordered; it reads LTPVSEVSEPPESPSPYLDPGAEHGGTGTAAQADDEEEMEEPEEMEPP. Positions 50–63 are enriched in acidic residues; the sequence is ADDEEEMEEPEEME. A run of 4 helical transmembrane segments spans residues 84 to 104, 139 to 159, 212 to 231, and 236 to 258; these read VLMV…IVYL, IVYI…CWIL, VGNY…IGFV, and IALI…NIFL. The region spanning 86-379 is the ABC transmembrane type-1 1 domain; sequence MVFGSVAAAA…AATNFYSFDQ (294 aa). A glycan (N-linked (GlcNAc...) asparagine) is linked at N291. 2 helical membrane passes run 310–330 and 351–371; these read GILI…LAIC and GEII…NQAA. The 236-residue stretch at 412 to 647 folds into the ABC transporter 1 domain; that stretch reads IEFRNVYFSY…GNLYAELLKC (236 aa). Position 447–454 (447–454) interacts with ATP; that stretch reads GRNGSGKS. N-linked (GlcNAc...) asparagine glycans are attached at residues N449 and N663. Disordered stretches follow at residues 670-696 and 709-815; these read AERD…SLQR and NSEE…DGQH. An N-linked (GlcNAc...) asparagine glycan is attached at N727. Residues 733–755 show a composition bias toward basic and acidic residues; it reads VGEKEPTIKRQDSFEMRLPELPK. The segment covering 761–770 has biased composition (polar residues); the sequence is PQRQKSNGSD. N767 carries N-linked (GlcNAc...) asparagine glycosylation. One can recognise an ABC transmembrane type-1 2 domain in the interval 835-1123; it reads AVLGSIGAAI…PFGLAPYILK (289 aa). The next 6 membrane-spanning stretches (helical) occupy residues 840–860, 880–900, 958–978, 982–1002, 1061–1081, and 1102–1122; these read IGAA…ALVV, LIIA…HFYF, IFIQ…LLGW, LVAL…KLWL, IGFA…LLLW, and MVFS…PYIL. Residues 1158 to 1395 enclose the ABC transporter 2 domain; that stretch reads IELKNIDFCY…NGLYVRLMQP (238 aa). N1178 carries N-linked (GlcNAc...) asparagine glycosylation. An ATP-binding site is contributed by 1193–1200; the sequence is GVSGSGKS. 2 N-linked (GlcNAc...) asparagine glycosylation sites follow: N1260 and N1346.

Belongs to the ABC transporter superfamily. ABCB family. Multidrug resistance exporter (TC 3.A.1.201) subfamily. As to expression, expressed in aerial tissues.

It is found in the membrane. The catalysed reaction is (indol-3-yl)acetate(in) + ATP + H2O = (indol-3-yl)acetate(out) + ADP + phosphate + H(+). Probable auxin efflux transporter that contributes, together with ABCB20 and in a FKBP42/TWD1-dependent manner, to the regulation of leaf position and morphology, internode distribution, roots development, and inflorescence organization, probably by modulating auxin repartition. In Arabidopsis thaliana (Mouse-ear cress), this protein is ABC transporter B family member 6.